We begin with the raw amino-acid sequence, 130 residues long: MIQSFTRLNVADNSGAKEIMCIKVLGGSHKRYASVGSVIVASVKKAIPNGKVKRGQVVKAVVVRTKKEIQRKNGSLVRFDDNAAVILDAKKDPVGTRIFGPVSREVRYANFMKIISLAPELYNEKRNQKK.

This sequence belongs to the universal ribosomal protein uL14 family. Part of the 50S ribosomal subunit. Forms a cluster with proteins L3 and L19. In the 70S ribosome, L14 and L19 interact and together make contacts with the 16S rRNA in bridges B5 and B8.

Functionally, binds to 23S rRNA. Forms part of two intersubunit bridges in the 70S ribosome. This Helicobacter pylori (strain P12) protein is Large ribosomal subunit protein uL14.